The following is a 410-amino-acid chain: Phospho-N-acetylmuramoyl-pentapeptide-transferase (410 aa).

The next 10 membrane-spanning stretches (helical) occupy residues 23–43 (YITF…TIYG), 73–93 (TPTM…FLFA), 96–116 (HNIY…IGFV), 132–152 (GIFK…VLYF), 215–235 (WAWL…SNGA), 248–268 (TSAV…NIIF), 285–305 (VFIS…SFPA), 307–327 (VFMG…LAIA), 332–352 (ILIV…IIQV), and 387–407 (KIVT…IVTL).

It belongs to the glycosyltransferase 4 family. MraY subfamily. Mg(2+) is required as a cofactor.

It localises to the cell inner membrane. The catalysed reaction is UDP-N-acetyl-alpha-D-muramoyl-L-alanyl-gamma-D-glutamyl-meso-2,6-diaminopimeloyl-D-alanyl-D-alanine + di-trans,octa-cis-undecaprenyl phosphate = di-trans,octa-cis-undecaprenyl diphospho-N-acetyl-alpha-D-muramoyl-L-alanyl-D-glutamyl-meso-2,6-diaminopimeloyl-D-alanyl-D-alanine + UMP. Its pathway is cell wall biogenesis; peptidoglycan biosynthesis. In terms of biological role, catalyzes the initial step of the lipid cycle reactions in the biosynthesis of the cell wall peptidoglycan: transfers peptidoglycan precursor phospho-MurNAc-pentapeptide from UDP-MurNAc-pentapeptide onto the lipid carrier undecaprenyl phosphate, yielding undecaprenyl-pyrophosphoryl-MurNAc-pentapeptide, known as lipid I. The sequence is that of Phospho-N-acetylmuramoyl-pentapeptide-transferase from Flavobacterium johnsoniae (strain ATCC 17061 / DSM 2064 / JCM 8514 / BCRC 14874 / CCUG 350202 / NBRC 14942 / NCIMB 11054 / UW101) (Cytophaga johnsonae).